We begin with the raw amino-acid sequence, 229 residues long: Platelet-activating factor acetylhydrolase IB subunit alpha2 (229 aa).

Active-site residues include Ser-48, Asp-193, and His-196.

It belongs to the 'GDSL' lipolytic enzyme family. Platelet-activating factor acetylhydrolase IB beta/gamma subunits subfamily. In terms of assembly, forms a catalytic dimer which is either homodimer (alpha2/alpha2 homodimer) or heterodimer with PAFAH1B3 (alpha2/alpha1 heterodimer). Component of the cytosolic (PAF-AH (I)) heterotetrameric enzyme, which is composed of PAFAH1B1 (beta), PAFAH1B2 (alpha2) and PAFAH1B3 (alpha1) subunits. The catalytic activity of the enzyme resides in the alpha1 (PAFAH1B3) and alpha2 (PAFAH1B2) subunits, whereas the beta subunit (PAFAH1B1) has regulatory activity. Trimer formation is not essential for the catalytic activity.

The protein localises to the cytoplasm. The enzyme catalyses a 1-O-alkyl-2-acetyl-sn-glycero-3-phosphocholine + H2O = a 1-O-alkyl-sn-glycero-3-phosphocholine + acetate + H(+). It carries out the reaction 1-O-hexadecyl-2-acetyl-sn-glycero-3-phosphocholine + H2O = 1-O-hexadecyl-sn-glycero-3-phosphocholine + acetate + H(+). It catalyses the reaction 1-O-hexadecyl-2-acetyl-sn-glycero-3-phosphate + H2O = 1-O-hexadecyl-sn-glycero-3-phosphate + acetate + H(+). The catalysed reaction is 1-O-hexadecyl-2-acetyl-sn-glycero-3-phosphoethanolamine + H2O = 1-O-hexadecyl-sn-glycero-3-phosphoethanolamine + acetate + H(+). In terms of biological role, alpha2 catalytic subunit of the cytosolic type I platelet-activating factor (PAF) acetylhydrolase (PAF-AH (I)) heterotetrameric enzyme that catalyzes the hydrolyze of the acetyl group at the sn-2 position of PAF and its analogs and modulates the action of PAF. This Gallus gallus (Chicken) protein is Platelet-activating factor acetylhydrolase IB subunit alpha2 (PAFAH1B2).